Reading from the N-terminus, the 452-residue chain is Histone acetyltransferase type B subunit 2 (452 aa).

WD repeat units follow at residues 155 to 195 (YEDG…NSKE), 205 to 245 (HHTK…SDGS), 256 to 296 (HHDA…NKAA), 300 to 340 (KESR…TPIS), 344 to 384 (SHCD…DDLS), and 401 to 441 (GHSS…SNDE).

This sequence belongs to the WD repeat RBAP46/RBAP48/MSI1 family. Component of the HAT-B complex composed of at least HAT1 and HAT2. The HAT-B complex binds to histone H4 tail.

Its subcellular location is the cytoplasm. The protein localises to the nucleus. Regulatory subunit of the histone acetylase B (HAT-B) complex. The complex acetylates 'Lys-12' of histone H4 which is required for telomeric silencing. This chain is Histone acetyltransferase type B subunit 2 (HAT2), found in Yarrowia lipolytica (strain CLIB 122 / E 150) (Yeast).